The sequence spans 448 residues: Tubulin beta chain (448 aa).

GTP-binding residues include Gln11, Glu69, Ser138, Gly142, Thr143, Gly144, Asn204, and Asn226. A Mg(2+)-binding site is contributed by Glu69. The segment at 429–448 (SISDGEEQPYAEEAAYEAEE) is disordered. The span at 432–448 (DGEEQPYAEEAAYEAEE) shows a compositional bias: acidic residues.

Belongs to the tubulin family. As to quaternary structure, dimer of alpha and beta chains. A typical microtubule is a hollow water-filled tube with an outer diameter of 25 nm and an inner diameter of 15 nM. Alpha-beta heterodimers associate head-to-tail to form protofilaments running lengthwise along the microtubule wall with the beta-tubulin subunit facing the microtubule plus end conferring a structural polarity. Microtubules usually have 13 protofilaments but different protofilament numbers can be found in some organisms and specialized cells. Requires Mg(2+) as cofactor.

It is found in the cytoplasm. Its subcellular location is the cytoskeleton. In terms of biological role, tubulin is the major constituent of microtubules, a cylinder consisting of laterally associated linear protofilaments composed of alpha- and beta-tubulin heterodimers. Microtubules grow by the addition of GTP-tubulin dimers to the microtubule end, where a stabilizing cap forms. Below the cap, tubulin dimers are in GDP-bound state, owing to GTPase activity of alpha-tubulin. The protein is Tubulin beta chain of Aspergillus fumigatus (strain ATCC MYA-4609 / CBS 101355 / FGSC A1100 / Af293) (Neosartorya fumigata).